The primary structure comprises 125 residues: Lymphocyte antigen 6 complex locus protein G6c (125 aa).

Positions Met-1 to Ala-18 are cleaved as a signal peptide. Residues Ile-20 to Val-111 form the UPAR/Ly6 domain. 3 disulfides stabilise this stretch: Cys-22-Cys-47, Cys-25-Cys-33, and Cys-39-Cys-65. The N-linked (GlcNAc...) asparagine glycan is linked to Asn-88. Cys-92 and Cys-97 are disulfide-bonded. Ser-99 carries GPI-anchor amidated serine lipidation. Residues Pro-100–His-125 constitute a propeptide, removed in mature form.

N-glycosylated.

It localises to the cell membrane. The polypeptide is Lymphocyte antigen 6 complex locus protein G6c (LY6G6C) (Bos taurus (Bovine)).